Here is a 225-residue protein sequence, read N- to C-terminus: UPF0758 protein XAC3915 (225 aa).

Residues 102–224 form the MPN domain; sequence ALSDPPSVGR…PVSFAERGWL (123 aa). Zn(2+)-binding residues include His-173, His-175, and Asp-186. The JAMM motif signature appears at 173 to 186; that stretch reads HNHPSGNPEPSEAD.

This sequence belongs to the UPF0758 family.

The sequence is that of UPF0758 protein XAC3915 from Xanthomonas axonopodis pv. citri (strain 306).